Here is a 207-residue protein sequence, read N- to C-terminus: Ribonuclease HII (207 aa).

One can recognise an RNase H type-2 domain in the interval Pro5 to Cys207. Positions 11, 12, and 117 each coordinate a divalent metal cation.

The protein belongs to the RNase HII family. Mn(2+) is required as a cofactor. Requires Mg(2+) as cofactor.

It localises to the cytoplasm. It catalyses the reaction Endonucleolytic cleavage to 5'-phosphomonoester.. Endonuclease that specifically degrades the RNA of RNA-DNA hybrids. The chain is Ribonuclease HII from Hyphomonas neptunium (strain ATCC 15444).